We begin with the raw amino-acid sequence, 679 residues long: Retrovirus-related Env polyprotein from Fv-4 locus (679 aa).

The segment at 268–321 is disordered; that stretch reads IGPNPVLSDQRPPSRPVPARPPPPSNSTPTGDPLTPPTGDPLTPTKPPQAGTGD. Pro residues-rich tracts occupy residues 280–293 and 301–314; these read PSRP…PPSN and LTPP…PTKP.

This chain is Retrovirus-related Env polyprotein from Fv-4 locus (Fv4), found in Mus musculus (Mouse).